Consider the following 383-residue polypeptide: Chaperone protein DnaJ (383 aa).

One can recognise a J domain in the interval 5-70 (DYYEALGVAR…QKRAAYDQFG (66 aa)). The segment at 139-217 (GTEVQIRVPT…CGGRGRVQSQ (79 aa)) adopts a CR-type zinc-finger fold. Residues Cys-152, Cys-155, Cys-169, Cys-172, Cys-191, Cys-194, Cys-205, and Cys-208 each coordinate Zn(2+). CXXCXGXG motif repeat units lie at residues 152–159 (CDACDGKG), 169–176 (CPTCKGHG), 191–198 (CPRCGGSG), and 205–212 (CRKCGGRG). The tract at residues 230-249 (TGDRIRLSGEGEPGENGGPP) is disordered.

This sequence belongs to the DnaJ family. Homodimer. The cofactor is Zn(2+).

It is found in the cytoplasm. Functionally, participates actively in the response to hyperosmotic and heat shock by preventing the aggregation of stress-denatured proteins and by disaggregating proteins, also in an autonomous, DnaK-independent fashion. Unfolded proteins bind initially to DnaJ; upon interaction with the DnaJ-bound protein, DnaK hydrolyzes its bound ATP, resulting in the formation of a stable complex. GrpE releases ADP from DnaK; ATP binding to DnaK triggers the release of the substrate protein, thus completing the reaction cycle. Several rounds of ATP-dependent interactions between DnaJ, DnaK and GrpE are required for fully efficient folding. Also involved, together with DnaK and GrpE, in the DNA replication of plasmids through activation of initiation proteins. This chain is Chaperone protein DnaJ, found in Alkalilimnicola ehrlichii (strain ATCC BAA-1101 / DSM 17681 / MLHE-1).